We begin with the raw amino-acid sequence, 251 residues long: Insertion sequence IS5376 putative ATP-binding protein (251 aa).

105 to 112 (GPPGIGKT) is a binding site for ATP.

It belongs to the IS21/IS1162 putative ATP-binding protein family.

The protein is Insertion sequence IS5376 putative ATP-binding protein of Geobacillus stearothermophilus (Bacillus stearothermophilus).